A 216-amino-acid polypeptide reads, in one-letter code: Thymidylate kinase (216 aa).

10–17 serves as a coordination point for ATP; it reads GIDGCGKT.

The protein belongs to the thymidylate kinase family.

It catalyses the reaction dTMP + ATP = dTDP + ADP. In terms of biological role, phosphorylation of dTMP to form dTDP in both de novo and salvage pathways of dTTP synthesis. In Prochlorococcus marinus (strain MIT 9303), this protein is Thymidylate kinase.